The following is a 566-amino-acid chain: MESTMRSPLPYGNACATCARAKCRCVPRNGGRGRCERCHHLNKECRAPQGRRKIQPKTLSRSVQLERKMDGLMSLLTSFGGRTDLPTPVQRQSEVQGMWRTEVESGTEDEETSASEEEYLRAFRTQRLQFLPLIHIPATTTVGDLKLQSPFLWQCISAVESKNTARQATLCVKIRELAGKRLLVDCDKSLDLLQGVLVYLAWITLHSQPHKSSLCMYSQMAIGLVFELGLNKPAPPDLSMTVSNSNAVGHMPGLEASISTRRTMHERRAVLSCFVLTSIIAQFLGRMGPLQWTSHMKQCLDILAESEESPGDRVLVQLTRTRLLVDQISHGPWSEGLYGLNSAQTLATFHLKALQSQLETIRAEIPIQLADNKPILFHLFDTELSLYEAALVKPLADEDFSSQRLDHLYACLRVVKQFFDLFFTIPPAGYTSLALPYIAQVSHCLVILFRLSTLDYPGWDKSTVKNTADILCIAEQISTRMAQVGDAIGMRSEGAYGDPFSKWGMMMQKLRSEWAIRLPDCSEVVVDRSSAESSCPSIEMGDLDCFVNWSELGWVMEGAGAGGFIQ.

Positions 15 to 45 (CATCARAKCRCVPRNGGRGRCERCHHLNKEC) form a DNA-binding region, zn(2)-C6 fungal-type.

The protein resides in the nucleus. Transcription factor; part of the gene cluster that mediates the biosynthesis of oxopyrrolidines, polyketide-amino acid hybrid compounds with feature structures of tetramic acid. This is Transcription factor opdL from Penicillium oxalicum (strain 114-2 / CGMCC 5302) (Penicillium decumbens).